A 336-amino-acid chain; its full sequence is Mitochondrial import receptor subunit TOM40 homolog (336 aa).

Positions 1-58 (MGNVLAASSPAPPPAGSPPVPGLVSVPPGFTMPPVAGLTPTPDKKEPQEERLPNPGTF) are disordered. Over residues 10–21 (PAPPPAGSPPVP) the composition is skewed to pro residues. The segment covering 42–52 (PDKKEPQEERL) has biased composition (basic and acidic residues).

It belongs to the Tom40 family. Forms part of the preprotein translocase complex of the outer mitochondrial membrane (TOM complex). Interacts with mitochondrial targeting sequences.

Its subcellular location is the mitochondrion outer membrane. Channel-forming protein essential for import of protein precursors into mitochondria. The sequence is that of Mitochondrial import receptor subunit TOM40 homolog (tomm40) from Xenopus laevis (African clawed frog).